The following is a 716-amino-acid chain: DNA ligase (716 aa).

Residues 47-51 (DATYD), 96-97 (SL), and Glu-130 contribute to the NAD(+) site. Lys-132 functions as the N6-AMP-lysine intermediate in the catalytic mechanism. NAD(+)-binding residues include Arg-153, Glu-190, Lys-306, and Lys-330. Zn(2+) contacts are provided by Cys-435, Cys-438, Cys-453, and Cys-459. Residues 638 to 716 (RSDSAVAGKT…EDEWLKLIEG (79 aa)) form the BRCT domain.

This sequence belongs to the NAD-dependent DNA ligase family. LigA subfamily. The cofactor is Mg(2+). It depends on Mn(2+) as a cofactor.

It catalyses the reaction NAD(+) + (deoxyribonucleotide)n-3'-hydroxyl + 5'-phospho-(deoxyribonucleotide)m = (deoxyribonucleotide)n+m + AMP + beta-nicotinamide D-nucleotide.. DNA ligase that catalyzes the formation of phosphodiester linkages between 5'-phosphoryl and 3'-hydroxyl groups in double-stranded DNA using NAD as a coenzyme and as the energy source for the reaction. It is essential for DNA replication and repair of damaged DNA. The protein is DNA ligase of Nitrobacter winogradskyi (strain ATCC 25391 / DSM 10237 / CIP 104748 / NCIMB 11846 / Nb-255).